We begin with the raw amino-acid sequence, 603 residues long: Glutathione-regulated potassium-efflux system protein KefB (603 aa).

The next 13 helical transmembrane spans lie at 5–25, 29–49, 55–75, 87–107, 115–135, 152–172, 180–202, 207–227, 230–250, 268–288, 291–311, 326–346, and 356–376; these read ALLT…PIAA, IGAV…GLGF, AILH…GLEL, IFGV…GALY, SALI…LQLM, VLLF…ILAG, WERI…YLVR, FIAA…LVLG, LFME…GILL, GLLL…GILY, IVKI…VLYF, FAGV…AAAS, and PLLL…MQLI. Residues 400 to 521 enclose the RCK N-terminal domain; it reads EPQVIVVGFG…VRHFSRETFS (122 aa).

Belongs to the monovalent cation:proton antiporter 2 (CPA2) transporter (TC 2.A.37) family. KefB subfamily. In terms of assembly, interacts with the regulatory subunit KefG.

Its subcellular location is the cell inner membrane. Its function is as follows. Pore-forming subunit of a potassium efflux system that confers protection against electrophiles. Catalyzes K(+)/H(+) antiport. The chain is Glutathione-regulated potassium-efflux system protein KefB from Pectobacterium carotovorum subsp. carotovorum (strain PC1).